We begin with the raw amino-acid sequence, 614 residues long: Putative binding protein BMEII0691 (614 aa).

The N-terminal stretch at 1-28 is a signal peptide; the sequence is MNRFIAFFRSVFLIGLVATAFGALPARA.

Belongs to the bacterial solute-binding protein 5 family.

It localises to the periplasm. The sequence is that of Putative binding protein BMEII0691 from Brucella melitensis biotype 1 (strain ATCC 23456 / CCUG 17765 / NCTC 10094 / 16M).